A 70-amino-acid chain; its full sequence is Large ribosomal subunit protein bL31 (70 aa).

Zn(2+)-binding residues include cysteine 16, cysteine 18, cysteine 37, and cysteine 40.

It belongs to the bacterial ribosomal protein bL31 family. Type A subfamily. In terms of assembly, part of the 50S ribosomal subunit. The cofactor is Zn(2+).

In terms of biological role, binds the 23S rRNA. The chain is Large ribosomal subunit protein bL31 from Shewanella halifaxensis (strain HAW-EB4).